The sequence spans 142 residues: UPF0332 protein PH1297 (142 aa).

The protein belongs to the UPF0332 family.

This chain is UPF0332 protein PH1297, found in Pyrococcus horikoshii (strain ATCC 700860 / DSM 12428 / JCM 9974 / NBRC 100139 / OT-3).